Here is a 380-residue protein sequence, read N- to C-terminus: Geranylgeranyl pyrophosphate synthase cle6 (380 aa).

Low complexity predominate over residues 1–19; sequence MHSVRTSTTSTSSMVSSTM. The segment at 1-55 is disordered; the sequence is MHSVRTSTTSTSSMVSSTMHPFDAFNAPQPYQQHHPPRWNIHNPHFSQTNGHSIQ. Positions 45-55 are enriched in polar residues; sequence HFSQTNGHSIQ. 3 residues coordinate isopentenyl diphosphate: Lys102, Arg105, and His134. The Mg(2+) site is built by Asp141 and Asp145. Arg150 contributes to the dimethylallyl diphosphate binding site. Arg151 provides a ligand contact to isopentenyl diphosphate. The dimethylallyl diphosphate site is built by Lys229, Thr230, and Gln263. A Mg(2+)-binding site is contributed by Asp266. 3 residues coordinate dimethylallyl diphosphate: Asn270, Lys280, and Lys290.

Belongs to the FPP/GGPP synthase family. Mg(2+) serves as cofactor.

It catalyses the reaction isopentenyl diphosphate + dimethylallyl diphosphate = (2E)-geranyl diphosphate + diphosphate. The enzyme catalyses isopentenyl diphosphate + (2E)-geranyl diphosphate = (2E,6E)-farnesyl diphosphate + diphosphate. The catalysed reaction is isopentenyl diphosphate + (2E,6E)-farnesyl diphosphate = (2E,6E,10E)-geranylgeranyl diphosphate + diphosphate. Its pathway is secondary metabolite biosynthesis; terpenoid biosynthesis. Geranylgeranyl pyrophosphate synthase; part of the cluster A that mediates the biosynthesis of chevalone E and its oxidized derivatives that possess a unique five-membered lactone ring and can synergistically enhance the cytotoxicity of doxorubicin (DOX) in breast cancer cells. Within the pathway, cle6 takes part to the biosynthesis of the molecular scaffold by providing geranylgeranyl pyrophosphate (GGPP) to the prenyltransferase cle5 for C-3 geranylgeranylation of triacetic acid lactone. The molecular scaffold is commonly biosynthesized by a series of enzymes including the non-reducing polyketide synthase (NR-PKS) cle1 that produces the alpha-pyrone triacetic acid lactone (TAL); The membrane-bound prenyltransferase cle5 that accepts TAL as its substrate to perform a C-3 geranylgeranylation reaction, in which the pathway-dedicated GGPS cle6 is required to provide GGPP, the other substrate of cle5; the FAD-dependent monooxygenase Cle3 that forms an (S)-epoxide ring at the terminal olefin of the geranylgeranyl group; and the terpene cyclase Cle7 that catalyzes the cyclization of the prenyl group that yields the pentacyclic pathway intermediate chevalone E. Chevalone E can derivatize into seven new oxidized analogs by the cytochrome P450 monooxygenases cle2 (acting at C-20) and cle4 (acting at C-11 and C-12). This is Geranylgeranyl pyrophosphate synthase cle6 from Aspergillus versicolor.